A 105-amino-acid chain; its full sequence is uncharacterized protein (105 aa).

A disordered region spans residues Asn81 to Lys105.

This is an uncharacterized protein from Dictyostelium discoideum (Social amoeba).